The primary structure comprises 177 residues: Large ribosomal subunit protein uL6 (177 aa).

It belongs to the universal ribosomal protein uL6 family. Part of the 50S ribosomal subunit.

This protein binds to the 23S rRNA, and is important in its secondary structure. It is located near the subunit interface in the base of the L7/L12 stalk, and near the tRNA binding site of the peptidyltransferase center. This Teredinibacter turnerae (strain ATCC 39867 / T7901) protein is Large ribosomal subunit protein uL6.